We begin with the raw amino-acid sequence, 118 residues long: Large ribosomal subunit protein uL18 (118 aa).

Belongs to the universal ribosomal protein uL18 family. Part of the 50S ribosomal subunit; part of the 5S rRNA/L5/L18/L25 subcomplex. Contacts the 5S and 23S rRNAs.

Functionally, this is one of the proteins that bind and probably mediate the attachment of the 5S RNA into the large ribosomal subunit, where it forms part of the central protuberance. The protein is Large ribosomal subunit protein uL18 of Parvibaculum lavamentivorans (strain DS-1 / DSM 13023 / NCIMB 13966).